Here is a 370-residue protein sequence, read N- to C-terminus: uncharacterized protein (370 aa).

At M1 the chain carries N-acetylmethionine.

Belongs to the ornithine cyclodeaminase/mu-crystallin family.

This is an uncharacterized protein from Saccharomyces cerevisiae (strain ATCC 204508 / S288c) (Baker's yeast).